Here is a 583-residue protein sequence, read N- to C-terminus: Afadin- and alpha-actinin-binding protein (583 aa).

3 coiled-coil regions span residues 108–220, 255–333, and 420–453; these read NNVE…LAIE, DYEA…QLTN, and EEKE…AIRL. The tract at residues 285–328 is disordered; that stretch reads LSPCPPLNRGGSAEESQELGDSDREERSAETSRETLDQSCEHAR. Over residues 305–328 the composition is skewed to basic and acidic residues; it reads DSDREERSAETSRETLDQSCEHAR. The disordered stretch occupies residues 480–527; the sequence is DRMRSSSSDGQSALSVKSEPEIRTSSSKAPPVKSSAYTTFSTPKSSKS. Positions 484 to 494 are enriched in polar residues; sequence SSSSDGQSALS. The span at 504-515 shows a compositional bias: low complexity; sequence SSSKAPPVKSSA. Residues 516-527 show a composition bias toward polar residues; that stretch reads YTTFSTPKSSKS.

The protein belongs to the ADIP family.

Its subcellular location is the cell junction. The protein resides in the adherens junction. The protein localises to the cytoplasm. It is found in the cytoskeleton. It localises to the microtubule organizing center. Its subcellular location is the centrosome. The protein resides in the centriolar satellite. Belongs to an adhesion system, which plays a role in the organization of homotypic, interneuronal and heterotypic cell-cell adherens junctions (AJs). Involved in cell movement. Acts as a centrosome maturation factor, probably by maintaining the integrity of the pericentriolar material and proper microtubule nucleation at mitotic spindle poles. This Oryzias latipes (Japanese rice fish) protein is Afadin- and alpha-actinin-binding protein (ssx2ip).